We begin with the raw amino-acid sequence, 400 residues long: Protein phosphatase methylesterase 1 (400 aa).

The tract at residues 1 to 72 is disordered; that stretch reads MSDLQRTWAK…NQKLFARPQG (72 aa). The segment covering 19–28 has biased composition (acidic residues); sequence PFDEPQEEQG. Residues 44 to 54 show a composition bias toward low complexity; the sequence is SSASSASSVSS. Residues 55 to 64 show a composition bias toward polar residues; it reads TGTIIPSPNQ. Catalysis depends on residues Ser-202, Asp-228, and His-358.

It belongs to the AB hydrolase superfamily.

The enzyme catalyses [phosphatase 2A protein]-C-terminal L-leucine methyl ester + H2O = [phosphatase 2A protein]-C-terminal L-leucine + methanol + H(+). Its function is as follows. Demethylates proteins that have been reversibly carboxymethylated. Demethylates the phosphatase PP2A catalytic subunit. The chain is Protein phosphatase methylesterase 1 (PPE1) from Gibberella zeae (strain ATCC MYA-4620 / CBS 123657 / FGSC 9075 / NRRL 31084 / PH-1) (Wheat head blight fungus).